Consider the following 364-residue polypeptide: Fructose-bisphosphate aldolase C (364 aa).

Tyr5 bears the Phosphotyrosine mark. Residues Ser36, Ser39, and Ser45 each carry the phosphoserine modification. Arg56 is a substrate binding site. Residue Lys111 is modified to N6-acetyllysine. At Ser132 the chain carries Phosphoserine. Lys147 contacts substrate. Glu188 (proton acceptor) is an active-site residue. Lys230 acts as the Schiff-base intermediate with dihydroxyacetone-P in catalysis.

The protein belongs to the class I fructose-bisphosphate aldolase family. Homotetramer. Interacts with ATP6V1E1.

The enzyme catalyses beta-D-fructose 1,6-bisphosphate = D-glyceraldehyde 3-phosphate + dihydroxyacetone phosphate. The protein operates within carbohydrate degradation; glycolysis; D-glyceraldehyde 3-phosphate and glycerone phosphate from D-glucose: step 4/4. The chain is Fructose-bisphosphate aldolase C (ALDOC) from Pan troglodytes (Chimpanzee).